We begin with the raw amino-acid sequence, 479 residues long: Cysteine protease effector 1 (479 aa).

In Escherichia coli O1:K1:H7 (strain ATCC 11775 / DSM 30083 / JCM 1649 / NBRC 102203 / NCTC 9001 / U5/41), this protein is Cysteine protease effector 1.